Here is a 209-residue protein sequence, read N- to C-terminus: Octanoyltransferase (209 aa).

The region spanning 30–209 (VNEPEIVYLV…IQTEFNKIFT (180 aa)) is the BPL/LPL catalytic domain. Residues 69–76 (RGGKFTFH), 143–145 (AIG), and 156–158 (GVA) each bind substrate. The active-site Acyl-thioester intermediate is Cys174.

It belongs to the LipB family.

It is found in the cytoplasm. The enzyme catalyses octanoyl-[ACP] + L-lysyl-[protein] = N(6)-octanoyl-L-lysyl-[protein] + holo-[ACP] + H(+). The protein operates within protein modification; protein lipoylation via endogenous pathway; protein N(6)-(lipoyl)lysine from octanoyl-[acyl-carrier-protein]: step 1/2. Its function is as follows. Catalyzes the transfer of endogenously produced octanoic acid from octanoyl-acyl-carrier-protein onto the lipoyl domains of lipoate-dependent enzymes. Lipoyl-ACP can also act as a substrate although octanoyl-ACP is likely to be the physiological substrate. The chain is Octanoyltransferase from Rickettsia canadensis (strain McKiel).